The sequence spans 222 residues: Triosephosphate isomerase (222 aa).

A substrate-binding site is contributed by 9-11; the sequence is NYK. Catalysis depends on histidine 93, which acts as the Electrophile. Glutamate 141 functions as the Proton acceptor in the catalytic mechanism. Residues isoleucine 146, glycine 181, and 202 to 203 each bind substrate; that span reads AS.

This sequence belongs to the triosephosphate isomerase family. Homotetramer; dimer of dimers.

The protein localises to the cytoplasm. It carries out the reaction D-glyceraldehyde 3-phosphate = dihydroxyacetone phosphate. It functions in the pathway carbohydrate biosynthesis; gluconeogenesis. Its pathway is carbohydrate degradation; glycolysis; D-glyceraldehyde 3-phosphate from glycerone phosphate: step 1/1. Its function is as follows. Involved in the gluconeogenesis. Catalyzes stereospecifically the conversion of dihydroxyacetone phosphate (DHAP) to D-glyceraldehyde-3-phosphate (G3P). The chain is Triosephosphate isomerase from Methanobrevibacter smithii (strain ATCC 35061 / DSM 861 / OCM 144 / PS).